Here is a 198-residue protein sequence, read N- to C-terminus: MVDDEKREVSEEIEEALKKLHLDDVDWARALSPHEILYLLDRCPFLQIVSTNEIEAFSETKFITAQSGWTIHHYGEAMSSSPGPLLFQGGDYRILGDDDEGDDGEGGTIVNPGKGTIVKQAFTTAAEMIALAQKSGWRGVRIIDGHPLMQWAAWMQATDDAFHLEGYEPDEKARKKRERVKRSEVEDQLKINVKPTRR.

The tract at residues 166–198 (GYEPDEKARKKRERVKRSEVEDQLKINVKPTRR) is disordered.

This is an uncharacterized protein from Coxiella burnetii (strain RSA 493 / Nine Mile phase I).